The primary structure comprises 435 residues: uncharacterized protein (435 aa).

Transmembrane regions (helical) follow at residues 14–34 (VSMA…GVGA), 44–64 (TFIL…KLGA), 84–104 (IITG…IALF), 123–143 (FNIA…NFFG), 153–173 (FIVL…LITI), 187–207 (VSGM…FGVI), 224–244 (AIFI…ISAI), 267–287 (FLGN…ISSA), 324–344 (LYIT…EGVA), 346–366 (ITSA…YILI), 375–395 (IVIF…YYQW), and 400–420 (FVFY…IIYR).

It is found in the cell membrane. This is an uncharacterized protein from Methanocaldococcus jannaschii (strain ATCC 43067 / DSM 2661 / JAL-1 / JCM 10045 / NBRC 100440) (Methanococcus jannaschii).